The following is a 113-amino-acid chain: MTSEQFEYHLTGKEILEKEFKTGLRGYNPEDVDEFLDMVIKDYSTFTQEIEALQAENIRLVQELDNAPVRTAPQPAPTFQAAAQPAGTTNFDILKRLSNLEKHVFGNKLDDND.

A coiled-coil region spans residues 36 to 68 (LDMVIKDYSTFTQEIEALQAENIRLVQELDNAP).

The protein belongs to the GpsB family. Forms polymers through the coiled coil domains. Interacts with PBP1, MreC and EzrA.

Its subcellular location is the cytoplasm. Functionally, divisome component that associates with the complex late in its assembly, after the Z-ring is formed, and is dependent on DivIC and PBP2B for its recruitment to the divisome. Together with EzrA, is a key component of the system that regulates PBP1 localization during cell cycle progression. Its main role could be the removal of PBP1 from the cell pole after pole maturation is completed. Also contributes to the recruitment of PBP1 to the division complex. Not essential for septum formation. The protein is Cell cycle protein GpsB of Listeria welshimeri serovar 6b (strain ATCC 35897 / DSM 20650 / CCUG 15529 / CIP 8149 / NCTC 11857 / SLCC 5334 / V8).